The following is a 285-amino-acid chain: Transcription factor JAMYB (285 aa).

2 consecutive HTH myb-type domains span residues 26–78 (SAEL…LNYL) and 79–133 (RPDV…QKHA). 2 consecutive DNA-binding regions (H-T-H motif) follow at residues 54–78 (WNAL…LNYL) and 106–129 (WSKI…RTRV).

The protein resides in the nucleus. Functionally, probable transcription factor that may be involved in the jasmonate-dependent defense responses to the rice blast fungus Magnaporthe oryzae. Does not seem to function in the salicylic acid-dependent signaling pathway. The polypeptide is Transcription factor JAMYB (Oryza sativa subsp. japonica (Rice)).